The chain runs to 127 residues: UPF0102 protein SYNAS_23220 (127 aa).

Belongs to the UPF0102 family.

In Syntrophus aciditrophicus (strain SB), this protein is UPF0102 protein SYNAS_23220.